Here is a 206-residue protein sequence, read N- to C-terminus: Ribosomal RNA small subunit methyltransferase G (206 aa).

S-adenosyl-L-methionine is bound by residues G73, L78, V124–E125, and R139.

The protein belongs to the methyltransferase superfamily. RNA methyltransferase RsmG family.

It localises to the cytoplasm. The enzyme catalyses guanosine(527) in 16S rRNA + S-adenosyl-L-methionine = N(7)-methylguanosine(527) in 16S rRNA + S-adenosyl-L-homocysteine. Its function is as follows. Specifically methylates the N7 position of guanine in position 527 of 16S rRNA. This Yersinia pseudotuberculosis serotype O:3 (strain YPIII) protein is Ribosomal RNA small subunit methyltransferase G.